The sequence spans 306 residues: Acetyl-coenzyme A carboxylase carboxyl transferase subunit beta (306 aa).

One can recognise a CoA carboxyltransferase N-terminal domain in the interval leucine 25–threonine 294. The disordered stretch occupies residues phenylalanine 286–alanine 306. Residues proline 288 to alanine 306 are compositionally biased toward low complexity.

This sequence belongs to the AccD/PCCB family. As to quaternary structure, acetyl-CoA carboxylase is a heterohexamer composed of biotin carboxyl carrier protein (AccB), biotin carboxylase (AccC) and two subunits each of ACCase subunit alpha (AccA) and ACCase subunit beta (AccD).

Its subcellular location is the cytoplasm. It catalyses the reaction N(6)-carboxybiotinyl-L-lysyl-[protein] + acetyl-CoA = N(6)-biotinyl-L-lysyl-[protein] + malonyl-CoA. It functions in the pathway lipid metabolism; malonyl-CoA biosynthesis; malonyl-CoA from acetyl-CoA: step 1/1. In terms of biological role, component of the acetyl coenzyme A carboxylase (ACC) complex. Biotin carboxylase (BC) catalyzes the carboxylation of biotin on its carrier protein (BCCP) and then the CO(2) group is transferred by the transcarboxylase to acetyl-CoA to form malonyl-CoA. This chain is Acetyl-coenzyme A carboxylase carboxyl transferase subunit beta, found in Bartonella grahamii (strain as4aup).